A 127-amino-acid chain; its full sequence is Small ribosomal subunit protein bS6 (127 aa).

This sequence belongs to the bacterial ribosomal protein bS6 family.

Binds together with bS18 to 16S ribosomal RNA. The polypeptide is Small ribosomal subunit protein bS6 (Sulfurovum sp. (strain NBC37-1)).